The following is a 599-amino-acid chain: Vitamin B12-dependent ribonucleotide reductase (599 aa).

Substrate is bound at residue 193–197; the sequence is PTGTI. Residues 519–555 form a disordered region; it reads LAQSAPRQAGPAKAATTAPAAKAQEPAAAPSPKQAHN. Positions 526–553 are enriched in low complexity; sequence QAGPAKAATTAPAAKAQEPAAAPSPKQA.

Belongs to the ribonucleoside diphosphate reductase class-2 family. Requires adenosylcob(III)alamin as cofactor.

It catalyses the reaction a 2'-deoxyribonucleoside 5'-diphosphate + [thioredoxin]-disulfide + H2O = a ribonucleoside 5'-diphosphate + [thioredoxin]-dithiol. Its function is as follows. Catalyzes the reduction of ribonucleotides to deoxyribonucleotides. May function to provide a pool of deoxyribonucleotide precursors for DNA repair during oxygen limitation and/or for immediate growth after restoration of oxygen. This chain is Vitamin B12-dependent ribonucleotide reductase (nrdJ), found in Streptantibioticus cattleyicolor (Streptomyces cattleya).